Here is a 213-residue protein sequence, read N- to C-terminus: Adenylate kinase (213 aa).

14 to 19 (GSGKGT) is a binding site for ATP. The interval 34-63 (SSGNLLRSAIKASTPLGIKASEYIDEGQLV) is NMP. AMP contacts are provided by residues Ser-35, Arg-40, 61–63 (QLV), 89–92 (GFPR), and Gln-96. The tract at residues 129–162 (SRFICPSCNFVYNQSQGFRECPTCHSELVRRSDD) is LID. Position 130 (Arg-130) interacts with ATP. Residues Cys-133 and Cys-136 each coordinate Zn(2+). Residue 139–140 (VY) coordinates ATP. 2 residues coordinate Zn(2+): Cys-149 and Cys-152. Residues Arg-159 and Arg-170 each coordinate AMP. Position 198 (Lys-198) interacts with ATP.

Belongs to the adenylate kinase family. In terms of assembly, monomer.

It is found in the cytoplasm. It carries out the reaction AMP + ATP = 2 ADP. It participates in purine metabolism; AMP biosynthesis via salvage pathway; AMP from ADP: step 1/1. Its function is as follows. Catalyzes the reversible transfer of the terminal phosphate group between ATP and AMP. Plays an important role in cellular energy homeostasis and in adenine nucleotide metabolism. The protein is Adenylate kinase of Chlamydia felis (strain Fe/C-56) (Chlamydophila felis).